The sequence spans 435 residues: Arginine/serine-rich coiled-coil protein 2 (435 aa).

Positions 1–27 (MAASDTERDGLAPEKTSPDRDKKKEQS) are enriched in basic and acidic residues. The interval 1–230 (MAASDTERDG…PSPPPFRGRN (230 aa)) is disordered. A2 carries the post-translational modification N-acetylalanine. S4 bears the Phosphoserine mark. 2 positions are modified to phosphothreonine: T6 and T16. Residues S17, S30, and S32 each carry the phosphoserine modification. The segment covering 35-51 (ASKHHYSRSRSRSRERK) has biased composition (basic residues). Residues 66–111 (RSKEARRHESKDKSSKKHKSEEHNDKEHSSDKGRERLNSSENGEDR) show a composition bias toward basic and acidic residues. The residue at position 104 (S104) is a Phosphoserine. The segment covering 112-214 (HKRKERKSSR…KRIEKPRRFS (103 aa)) has biased composition (basic residues). Positions 230–270 (NTAMDAQEALARRLERAKKLQEQREKEMVEKQKQQEIAAAA) form a coiled coil. A Glycyl lysine isopeptide (Lys-Gly) (interchain with G-Cter in SUMO1); alternate cross-link involves residue K376. Residue K376 forms a Glycyl lysine isopeptide (Lys-Gly) (interchain with G-Cter in SUMO2); alternate linkage. S377 carries the phosphoserine modification.

It belongs to the RSRC2 family.

The sequence is that of Arginine/serine-rich coiled-coil protein 2 (RSRC2) from Pongo abelii (Sumatran orangutan).